Reading from the N-terminus, the 229-residue chain is Nectarin-1 (229 aa).

Residues 1 to 32 (MAAFGINSKIFQSMEMAILFLLAISIDRYCFA) form the signal peptide. An intrachain disulfide couples Cys42 to Cys57. Residue Asn60 is glycosylated (N-linked (GlcNAc...) asparagine). In terms of domain architecture, Cupin type-1 spans 69 to 217 (LAISKPGATN…TFQINTEDVQ (149 aa)). His117, His119, Glu124, and His163 together coordinate Mn(2+).

As to quaternary structure, monomer. In the absence of manganese, it forms tetrameric and pentameric forms which show superoxide dismutase activity. It depends on Mn(2+) as a cofactor. In terms of tissue distribution, nectary tissues and to a lower level ovary. Not detected in petals, stems, leaves, roots or other floral tissues.

It is found in the secreted. Its subcellular location is the extracellular space. It localises to the apoplast. It catalyses the reaction 2 superoxide + 2 H(+) = H2O2 + O2. Its function is as follows. May interact with bacterial adhesins thereby protecting the reproductive tissues from microbial attack. Has no oxalate oxidase activity. This is Nectarin-1 (NECI) from Nicotiana langsdorffii x Nicotiana sanderae (Ornamental tobacco).